We begin with the raw amino-acid sequence, 354 residues long: Holliday junction branch migration complex subunit RuvB (354 aa).

A disordered region spans residues 1 to 24 (MSIQTDDFAPVPPPKRVVSAAPTS). The segment at 5–195 (TDDFAPVPPP…FGIVARLEFY (191 aa)) is large ATPase domain (RuvB-L). Residues Leu-34, Arg-35, Gly-76, Lys-79, Thr-80, Thr-81, 142–144 (EDY), Arg-185, Tyr-195, and Arg-232 contribute to the ATP site. A Mg(2+)-binding site is contributed by Thr-80. Positions 196 to 266 (TPEELSRIVT…IAQRALAMLD (71 aa)) are small ATPAse domain (RuvB-S). The tract at residues 269 to 354 (PQGFDVMDRK…RQHTDLFGPA (86 aa)) is head domain (RuvB-H). DNA-binding residues include Arg-324 and Arg-329.

It belongs to the RuvB family. Homohexamer. Forms an RuvA(8)-RuvB(12)-Holliday junction (HJ) complex. HJ DNA is sandwiched between 2 RuvA tetramers; dsDNA enters through RuvA and exits via RuvB. An RuvB hexamer assembles on each DNA strand where it exits the tetramer. Each RuvB hexamer is contacted by two RuvA subunits (via domain III) on 2 adjacent RuvB subunits; this complex drives branch migration. In the full resolvosome a probable DNA-RuvA(4)-RuvB(12)-RuvC(2) complex forms which resolves the HJ.

Its subcellular location is the cytoplasm. The catalysed reaction is ATP + H2O = ADP + phosphate + H(+). Its function is as follows. The RuvA-RuvB-RuvC complex processes Holliday junction (HJ) DNA during genetic recombination and DNA repair, while the RuvA-RuvB complex plays an important role in the rescue of blocked DNA replication forks via replication fork reversal (RFR). RuvA specifically binds to HJ cruciform DNA, conferring on it an open structure. The RuvB hexamer acts as an ATP-dependent pump, pulling dsDNA into and through the RuvAB complex. RuvB forms 2 homohexamers on either side of HJ DNA bound by 1 or 2 RuvA tetramers; 4 subunits per hexamer contact DNA at a time. Coordinated motions by a converter formed by DNA-disengaged RuvB subunits stimulates ATP hydrolysis and nucleotide exchange. Immobilization of the converter enables RuvB to convert the ATP-contained energy into a lever motion, pulling 2 nucleotides of DNA out of the RuvA tetramer per ATP hydrolyzed, thus driving DNA branch migration. The RuvB motors rotate together with the DNA substrate, which together with the progressing nucleotide cycle form the mechanistic basis for DNA recombination by continuous HJ branch migration. Branch migration allows RuvC to scan DNA until it finds its consensus sequence, where it cleaves and resolves cruciform DNA. The protein is Holliday junction branch migration complex subunit RuvB of Paracidovorax citrulli (strain AAC00-1) (Acidovorax citrulli).